The sequence spans 142 residues: Large ribosomal subunit protein uL11 (142 aa).

Belongs to the universal ribosomal protein uL11 family. As to quaternary structure, part of the ribosomal stalk of the 50S ribosomal subunit. Interacts with L10 and the large rRNA to form the base of the stalk. L10 forms an elongated spine to which L12 dimers bind in a sequential fashion forming a multimeric L10(L12)X complex. In terms of processing, one or more lysine residues are methylated.

Functionally, forms part of the ribosomal stalk which helps the ribosome interact with GTP-bound translation factors. In Dictyoglomus turgidum (strain DSM 6724 / Z-1310), this protein is Large ribosomal subunit protein uL11.